Reading from the N-terminus, the 1871-residue chain is Plexin-A3 (1871 aa).

A signal peptide spans 1-19 (MPSVCLLLLLFLAVGGALG). Residues 20-488 (NRPFRAFVVT…SEKQVSQLPV (469 aa)) enclose the Sema domain. Topologically, residues 20–1220 (NRPFRAFVVT…SAERALTLPA (1201 aa)) are extracellular. N59 carries an N-linked (GlcNAc...) asparagine glycan. 9 disulfide bridges follow: C77–C86, C112–C120, C266–C387, C282–C338, C356–C375, C491–C508, C497–C539, C500–C517, and C511–C523. A glycan (N-linked (GlcNAc...) asparagine) is linked at N548. C574 and C594 form a disulfide bridge. 3 N-linked (GlcNAc...) asparagine glycosylation sites follow: N637, N738, and N746. 4 consecutive IPT/TIG domains span residues 840–933 (PRIT…YSFV), 935–1020 (PTFD…YTYT), 1023–1122 (PTVT…FTYY), and 1125–1211 (PSFE…LHIS). N1009, N1036, N1073, N1115, and N1162 each carry an N-linked (GlcNAc...) asparagine glycan. Residues 1221–1241 (MMGLAAGGGLLLLAITAVLVA) traverse the membrane as a helical segment. The Cytoplasmic segment spans residues 1242–1871 (YKRKTQDADR…QIISLVSSDS (630 aa)). S1596 is modified (phosphoserine).

The protein belongs to the plexin family. In terms of assembly, interacts with CBFA2T3/MTG16.

It is found in the cell membrane. Coreceptor for SEMA3A and SEMA3F. Necessary for signaling by class 3 semaphorins and subsequent remodeling of the cytoskeleton. Plays a role in axon guidance in the developing nervous system. Regulates the migration of sympathetic neurons, but not of neural crest precursors. Required for normal dendrite spine morphology in pyramidal neurons. May play a role in regulating semaphorin-mediated programmed cell death in the developing nervous system. Class 3 semaphorins bind to a complex composed of a neuropilin and a plexin. The plexin modulates the affinity of the complex for specific semaphorins, and its cytoplasmic domain is required for the activation of down-stream signaling events in the cytoplasm. The chain is Plexin-A3 (PLXNA3) from Homo sapiens (Human).